The primary structure comprises 175 residues: Arginine repressor (175 aa).

The segment at 1–23 (MSVSTPERGGAEQGKGPAIARTR) is disordered.

Belongs to the ArgR family.

Its subcellular location is the cytoplasm. The protein operates within amino-acid biosynthesis; L-arginine biosynthesis [regulation]. Regulates arginine biosynthesis genes. The protein is Arginine repressor of Nocardia farcinica (strain IFM 10152).